Consider the following 465-residue polypeptide: Gamma-aminobutyric acid receptor subunit gamma-1 (465 aa).

A signal peptide spans 1–20 (MGSGKVFLFSPSLLWSQTRG). Over 21–273 (VRLIFLLLTL…FDLSRRMGYF (253 aa)) the chain is Extracellular. N-linked (GlcNAc...) asparagine glycosylation is found at N50 and N127. Residues C188 and C202 are joined by a disulfide bond. N-linked (GlcNAc...) asparagine glycosylation is present at N245. A helical transmembrane segment spans residues 274–294 (TIQTYIPCILTVVLSWVSFWI). At 295 to 300 (NKDAVP) the chain is on the cytoplasmic side. A helical membrane pass occupies residues 301-320 (ARTSLGITTVLTMTTLSTIA). Over 321 to 328 (RKSLPKVS) the chain is Extracellular. The chain crosses the membrane as a helical span at residues 329-349 (YVTAMDLFVSVCFIFVFAALM). Residues 350 to 444 (EYGTLHYFTS…RIAKIDSYSR (95 aa)) lie on the Cytoplasmic side of the membrane. The helical transmembrane segment at 445–465 (IFFPTAFALFNLVYWVGYLYL) threads the bilayer.

Belongs to the ligand-gated ion channel (TC 1.A.9) family. Gamma-aminobutyric acid receptor (TC 1.A.9.5) subfamily. GABRG1 sub-subfamily. In terms of assembly, heteropentamer, formed by a combination of alpha (GABRA1-6), beta (GABRB1-3), gamma (GABRG1-3), delta (GABRD), epsilon (GABRE), rho (GABRR1-3), pi (GABRP) and theta (GABRQ) chains, each subunit exhibiting distinct physiological and pharmacological properties. In terms of processing, may be palmitoylated. In terms of tissue distribution, expressed in brain.

The protein localises to the postsynaptic cell membrane. It localises to the cell membrane. The catalysed reaction is chloride(in) = chloride(out). Gamma subunit of the heteropentameric ligand-gated chloride channel gated by gamma-aminobutyric acid (GABA), a major inhibitory neurotransmitter in the brain. GABA-gated chloride channels, also named GABA(A) receptors (GABAAR), consist of five subunits arranged around a central pore and contain GABA active binding site(s) located at the alpha and beta subunit interface(s). When activated by GABA, GABAARs selectively allow the flow of chloride anions across the cell membrane down their electrochemical gradient. Chloride influx into the postsynaptic neuron following GABAAR opening decreases the neuron ability to generate a new action potential, thereby reducing nerve transmission. This chain is Gamma-aminobutyric acid receptor subunit gamma-1, found in Rattus norvegicus (Rat).